The primary structure comprises 24 residues: Brevinin-1BYb (24 aa).

A disulfide bridge connects residues cysteine 18 and cysteine 24.

Expressed by the skin glands.

The protein resides in the secreted. In terms of biological role, antibacterial activity against Gram-positive bacterium S.aureus and Gram-negative bacterium E.coli. Has moderate antifungal activity against C.albicans and strong hemolytic activity. This is Brevinin-1BYb from Rana boylii (Foothill yellow-legged frog).